Here is a 306-residue protein sequence, read N- to C-terminus: Ribonuclease Z (306 aa).

The Zn(2+) site is built by His63, His65, Asp67, His68, His141, Asp211, and His269. The active-site Proton acceptor is the Asp67.

This sequence belongs to the RNase Z family. As to quaternary structure, homodimer. Zn(2+) serves as cofactor.

The enzyme catalyses Endonucleolytic cleavage of RNA, removing extra 3' nucleotides from tRNA precursor, generating 3' termini of tRNAs. A 3'-hydroxy group is left at the tRNA terminus and a 5'-phosphoryl group is left at the trailer molecule.. In terms of biological role, zinc phosphodiesterase, which displays some tRNA 3'-processing endonuclease activity. Probably involved in tRNA maturation, by removing a 3'-trailer from precursor tRNA. The chain is Ribonuclease Z from Staphylococcus aureus (strain MSSA476).